A 100-amino-acid chain; its full sequence is Integration host factor subunit alpha (100 aa).

A disordered region spans residues 50 to 70; the sequence is GNFQLRDKPQRPGRNPKTGEE.

It belongs to the bacterial histone-like protein family. As to quaternary structure, heterodimer of an alpha and a beta chain.

This protein is one of the two subunits of integration host factor, a specific DNA-binding protein that functions in genetic recombination as well as in transcriptional and translational control. The chain is Integration host factor subunit alpha from Chromobacterium violaceum (strain ATCC 12472 / DSM 30191 / JCM 1249 / CCUG 213 / NBRC 12614 / NCIMB 9131 / NCTC 9757 / MK).